Reading from the N-terminus, the 304-residue chain is 33 kDa chaperonin (304 aa).

Cystine bridges form between cysteine 245-cysteine 247 and cysteine 278-cysteine 281.

This sequence belongs to the HSP33 family. In terms of processing, under oxidizing conditions two disulfide bonds are formed involving the reactive cysteines. Under reducing conditions zinc is bound to the reactive cysteines and the protein is inactive.

The protein localises to the cytoplasm. Its function is as follows. Redox regulated molecular chaperone. Protects both thermally unfolding and oxidatively damaged proteins from irreversible aggregation. Plays an important role in the bacterial defense system toward oxidative stress. The chain is 33 kDa chaperonin from Microcystis aeruginosa (strain NIES-843 / IAM M-2473).